The primary structure comprises 162 residues: Probable chemoreceptor glutamine deamidase CheD (162 aa).

It belongs to the CheD family.

It carries out the reaction L-glutaminyl-[protein] + H2O = L-glutamyl-[protein] + NH4(+). Probably deamidates glutamine residues to glutamate on methyl-accepting chemotaxis receptors (MCPs), playing an important role in chemotaxis. The chain is Probable chemoreceptor glutamine deamidase CheD from Clostridium botulinum (strain Eklund 17B / Type B).